The chain runs to 287 residues: Cell division protein ZipA (287 aa).

Residue Met-1 is a topological domain, periplasmic. A helical membrane pass occupies residues 2-22 (EIGLREWLIVIGIIVIAGILF). The Cytoplasmic portion of the chain corresponds to 23-287 (DGWRRMRGSK…ERRALTQRRG (265 aa)). Residues 48–140 (DEEETTSAEV…PTQRITEDKD (93 aa)) are disordered. Basic and acidic residues-rich tracts occupy residues 64-77 (LDTH…EHDL), 85-104 (REGK…KDEP), and 121-140 (GRDD…EDKD).

Belongs to the ZipA family. As to quaternary structure, interacts with FtsZ via their C-terminal domains.

It localises to the cell inner membrane. Its function is as follows. Essential cell division protein that stabilizes the FtsZ protofilaments by cross-linking them and that serves as a cytoplasmic membrane anchor for the Z ring. Also required for the recruitment to the septal ring of downstream cell division proteins. The protein is Cell division protein ZipA of Pseudomonas syringae pv. syringae (strain B728a).